The following is a 553-amino-acid chain: Undecaprenyl phosphate-alpha-4-amino-4-deoxy-L-arabinose arabinosyl transferase 2 (553 aa).

Transmembrane regions (helical) follow at residues 6–26 (ASKI…LFPL), 85–105 (FAVR…IYLL), 115–135 (VAFV…VGTY), 137–157 (VLDP…FWAL), 178–198 (MAFM…MIPV), 208–228 (MLLY…PWVL), 261–281 (FWYY…LLPG), 295–315 (ELFF…IAKG), 317–337 (LPTY…KYGV), 352–372 (GYIN…IQLV), 386–406 (WVLA…CSTL), and 410–430 (HWLW…QAIP).

This sequence belongs to the glycosyltransferase 83 family.

It localises to the cell inner membrane. The catalysed reaction is 4-amino-4-deoxy-alpha-L-arabinopyranosyl di-trans,octa-cis-undecaprenyl phosphate + lipid IVA = lipid IIA + di-trans,octa-cis-undecaprenyl phosphate.. It functions in the pathway lipopolysaccharide metabolism; 4-amino-4-deoxy-beta-L-arabinose-lipid A biosynthesis. Its function is as follows. Catalyzes the transfer of the L-Ara4N moiety of the glycolipid undecaprenyl phosphate-alpha-L-Ara4N to lipid A. The modified arabinose is attached to lipid A and is required for resistance to polymyxin and cationic antimicrobial peptides. The polypeptide is Undecaprenyl phosphate-alpha-4-amino-4-deoxy-L-arabinose arabinosyl transferase 2 (Proteus mirabilis (strain HI4320)).